The sequence spans 610 residues: Dopamine beta-hydroxylase (610 aa).

Residues 1–9 (MQVPSPSVR) are Cytoplasmic-facing. The helical; Signal-anchor for type II membrane protein transmembrane segment at 10–30 (EAASMYGTAVAVFLVILVAAL) threads the bilayer. Over 31-610 (QGSAPAESPF…TVLNISGGKG (580 aa)) the chain is Intragranular. In terms of domain architecture, DOMON spans 50–166 (GTLELSWNIS…GTVHLVYGFL (117 aa)). 6 cysteine pairs are disulfide-bonded: Cys-147–Cys-589, Cys-225–Cys-276, Cys-262–Cys-288, Cys-383–Cys-496, Cys-387–Cys-558, and Cys-459–Cys-481. N-linked (GlcNAc...) asparagine glycosylation is present at Asn-177. The active site involves Tyr-223. Cu(2+) is bound by residues His-255 and His-256. Cu(2+)-binding residues include His-326, His-405, His-407, and Met-480. His-405 is a catalytic residue. N-linked (GlcNAc...) asparagine glycosylation is present at Asn-559. The segment at 585 to 610 (PTPHCPASQAQSPAGPTVLNISGGKG) is disordered.

It belongs to the copper type II ascorbate-dependent monooxygenase family. As to quaternary structure, homotetramer; composed of two disulfide-linked dimers. Cu(2+) is required as a cofactor. In terms of processing, proteolytic cleavage after the membrane-anchor leads to the release of the soluble form. Post-translationally, N-glycosylated. As to expression, detected in chromaffin granules in the adrenal medulla (at protein level). Detected in adrenal medulla.

Its subcellular location is the cytoplasmic vesicle. It localises to the secretory vesicle lumen. The protein resides in the secretory vesicle. It is found in the chromaffin granule lumen. The protein localises to the secretory vesicle membrane. Its subcellular location is the chromaffin granule membrane. It carries out the reaction dopamine + 2 L-ascorbate + O2 = (R)-noradrenaline + 2 monodehydro-L-ascorbate radical + H2O. It participates in catecholamine biosynthesis; (R)-noradrenaline biosynthesis; (R)-noradrenaline from dopamine: step 1/1. Functionally, catalyzes the hydroxylation of dopamine to noradrenaline (also known as norepinephrine), and is thus vital for regulation of these neurotransmitters. The polypeptide is Dopamine beta-hydroxylase (DBH) (Bos taurus (Bovine)).